The chain runs to 222 residues: Cytidylate kinase (222 aa).

11-19 (GPTASGKGT) serves as a coordination point for ATP.

This sequence belongs to the cytidylate kinase family. Type 1 subfamily.

It localises to the cytoplasm. It catalyses the reaction CMP + ATP = CDP + ADP. It carries out the reaction dCMP + ATP = dCDP + ADP. The polypeptide is Cytidylate kinase (Cupriavidus necator (strain ATCC 17699 / DSM 428 / KCTC 22496 / NCIMB 10442 / H16 / Stanier 337) (Ralstonia eutropha)).